The following is a 225-amino-acid chain: Ribosomal RNA small subunit methyltransferase G (225 aa).

S-adenosyl-L-methionine contacts are provided by residues Gly-96, Phe-101, 146-147 (AE), and Arg-160.

This sequence belongs to the methyltransferase superfamily. RNA methyltransferase RsmG family.

It localises to the cytoplasm. In terms of biological role, specifically methylates the N7 position of a guanine in 16S rRNA. The polypeptide is Ribosomal RNA small subunit methyltransferase G (Mycoplasma mobile (strain ATCC 43663 / 163K / NCTC 11711) (Mesomycoplasma mobile)).